Reading from the N-terminus, the 454-residue chain is Allantoinase (454 aa).

Zn(2+) is bound by residues H58, H60, K149, H189, H245, and D318. K149 carries the post-translational modification N6-carboxylysine.

This sequence belongs to the metallo-dependent hydrolases superfamily. Allantoinase family. As to quaternary structure, homotetramer. It depends on Zn(2+) as a cofactor. In terms of processing, carboxylation allows a single lysine to coordinate two zinc ions.

The enzyme catalyses (S)-allantoin + H2O = allantoate + H(+). It functions in the pathway nitrogen metabolism; (S)-allantoin degradation; allantoate from (S)-allantoin: step 1/1. Its function is as follows. Catalyzes the conversion of allantoin (5-ureidohydantoin) to allantoic acid by hydrolytic cleavage of the five-member hydantoin ring. The protein is Allantoinase of Enterococcus faecalis (strain ATCC 700802 / V583).